Reading from the N-terminus, the 310-residue chain is 3,5-dioxohexanoate:acetyl-CoA acetone transferase (310 aa).

Residues H49, H51, and E258 each contribute to the Zn(2+) site.

The protein belongs to the BKACE family. Zn(2+) is required as a cofactor.

It carries out the reaction 3,5-dioxohexanoate + acetyl-CoA = acetoacetyl-CoA + acetoacetate. Catalyzes the condensation of 3,5-dioxohexanoate and acetyl-CoA, forming acetoacetate and acetoacetyl-CoA. May be involved in fatty acid biosynthesis rescue via triacetic acid lactone. The polypeptide is 3,5-dioxohexanoate:acetyl-CoA acetone transferase (Paraburkholderia graminis (strain ATCC 700544 / DSM 17151 / LMG 18924 / NCIMB 13744 / C4D1M)).